Here is a 237-residue protein sequence, read N- to C-terminus: UPF0173 metal-dependent hydrolase HQ_3368A (237 aa).

This sequence belongs to the UPF0173 family.

The polypeptide is UPF0173 metal-dependent hydrolase HQ_3368A (Haloquadratum walsbyi (strain DSM 16790 / HBSQ001)).